The following is an 89-amino-acid chain: Phosphocarrier protein HPr (89 aa).

An HPr domain is found at 2-89 (AKFSAIITDK…TMIDTALIQG (88 aa)). His15 serves as the catalytic Pros-phosphohistidine intermediate. Ser46 carries the post-translational modification Phosphoserine; by HPrK/P.

Belongs to the HPr family.

The protein localises to the cytoplasm. Its activity is regulated as follows. Phosphorylation on Ser-46 inhibits the phosphoryl transfer from enzyme I to HPr. General (non sugar-specific) component of the phosphoenolpyruvate-dependent sugar phosphotransferase system (sugar PTS). This major carbohydrate active-transport system catalyzes the phosphorylation of incoming sugar substrates concomitantly with their translocation across the cell membrane. The phosphoryl group from phosphoenolpyruvate (PEP) is transferred to the phosphoryl carrier protein HPr by enzyme I. Phospho-HPr then transfers it to the PTS EIIA domain. In terms of biological role, P-Ser-HPr interacts with the catabolite control protein A (CcpA), forming a complex that binds to DNA at the catabolite response elements cre, operator sites preceding a large number of catabolite-regulated genes. Thus, P-Ser-HPr is a corepressor in carbon catabolite repression (CCR), a mechanism that allows bacteria to coordinate and optimize the utilization of available carbon sources. P-Ser-HPr also plays a role in inducer exclusion, in which it probably interacts with several non-PTS permeases and inhibits their transport activity. This is Phosphocarrier protein HPr (ptsH) from Mycoplasma capricolum subsp. capricolum (strain California kid / ATCC 27343 / NCTC 10154).